Reading from the N-terminus, the 545-residue chain is Methionine--tRNA ligase (545 aa).

Positions 10–20 (PYANGSLHIGH) match the 'HIGH' region motif. Positions 141, 144, 153, and 156 each coordinate Zn(2+). Residues 329–333 (KISTS) carry the 'KMSKS' region motif. T332 is an ATP binding site.

The protein belongs to the class-I aminoacyl-tRNA synthetase family. MetG type 1 subfamily. In terms of assembly, monomer. It depends on Zn(2+) as a cofactor.

Its subcellular location is the cytoplasm. It carries out the reaction tRNA(Met) + L-methionine + ATP = L-methionyl-tRNA(Met) + AMP + diphosphate. Its function is as follows. Is required not only for elongation of protein synthesis but also for the initiation of all mRNA translation through initiator tRNA(fMet) aminoacylation. The chain is Methionine--tRNA ligase from Streptococcus pneumoniae (strain 70585).